The following is a 59-amino-acid chain: Antitoxin RelB4 (59 aa).

The segment at 38 to 59 is disordered; it reads VGEWLKTLGTPHQTPPPYSWRK. The segment covering 50–59 has biased composition (pro residues); sequence QTPPPYSWRK.

Functionally, antitoxin component of a type II toxin-antitoxin (TA) system. Neutralizes the effect of cognate toxin RelE4, but no other RelE or ParE toxin. The polypeptide is Antitoxin RelB4 (relB4) (Caulobacter vibrioides (strain ATCC 19089 / CIP 103742 / CB 15) (Caulobacter crescentus)).